Reading from the N-terminus, the 200-residue chain is Large ribosomal subunit protein uL4 (200 aa).

A disordered region spans residues 43–71; it reads RAQKTRAEVSGSGKKPWRQKGTGRARSGD.

It belongs to the universal ribosomal protein uL4 family. As to quaternary structure, part of the 50S ribosomal subunit.

Its function is as follows. One of the primary rRNA binding proteins, this protein initially binds near the 5'-end of the 23S rRNA. It is important during the early stages of 50S assembly. It makes multiple contacts with different domains of the 23S rRNA in the assembled 50S subunit and ribosome. Forms part of the polypeptide exit tunnel. The polypeptide is Large ribosomal subunit protein uL4 (Pasteurella multocida (strain Pm70)).